Consider the following 234-residue polypeptide: Sugar fermentation stimulation protein homolog (234 aa).

This sequence belongs to the SfsA family.

The protein is Sugar fermentation stimulation protein homolog of Shewanella pealeana (strain ATCC 700345 / ANG-SQ1).